Reading from the N-terminus, the 276-residue chain is Diaminopimelate epimerase (276 aa).

Substrate-binding residues include Asn-13, Gln-46, and Asn-66. Residue Cys-75 is the Proton donor of the active site. Substrate-binding positions include 76 to 77, Asn-159, Asn-192, and 210 to 211; these read GN and ER. Cys-219 (proton acceptor) is an active-site residue. 220–221 contributes to the substrate binding site; it reads GT.

It belongs to the diaminopimelate epimerase family. In terms of assembly, homodimer.

Its subcellular location is the cytoplasm. The enzyme catalyses (2S,6S)-2,6-diaminopimelate = meso-2,6-diaminopimelate. The protein operates within amino-acid biosynthesis; L-lysine biosynthesis via DAP pathway; DL-2,6-diaminopimelate from LL-2,6-diaminopimelate: step 1/1. Functionally, catalyzes the stereoinversion of LL-2,6-diaminopimelate (L,L-DAP) to meso-diaminopimelate (meso-DAP), a precursor of L-lysine and an essential component of the bacterial peptidoglycan. The polypeptide is Diaminopimelate epimerase (Pseudomonas putida (strain GB-1)).